Reading from the N-terminus, the 699-residue chain is Polyribonucleotide nucleotidyltransferase (699 aa).

Asp-485 and Asp-491 together coordinate Mg(2+). Residues 552–611 enclose the KH domain; the sequence is PRITTIKINPEKIRDVIGKGGAVIRALTEETGTTIELEDDGTVRIASSNGEATKEAIRRI. The region spanning 621 to 689 is the S1 motif domain; sequence GRIYNGKVIR…RQGRVRLSIK (69 aa).

This sequence belongs to the polyribonucleotide nucleotidyltransferase family. In terms of assembly, component of the RNA degradosome, which is a multiprotein complex involved in RNA processing and mRNA degradation. Mg(2+) serves as cofactor.

The protein resides in the cytoplasm. It catalyses the reaction RNA(n+1) + phosphate = RNA(n) + a ribonucleoside 5'-diphosphate. Functionally, involved in mRNA degradation. Catalyzes the phosphorolysis of single-stranded polyribonucleotides processively in the 3'- to 5'-direction. This is Polyribonucleotide nucleotidyltransferase from Shewanella sp. (strain W3-18-1).